The primary structure comprises 1253 residues: Cytoplasmic FMR1-interacting protein 1 (1253 aa).

Serine 583 bears the Phosphoserine mark. Threonine 1234 is subject to Phosphothreonine.

This sequence belongs to the CYFIP family. As to quaternary structure, component of the WAVE1 complex composed of ABI2, CYFIP1 or CYFIP2, BRK1, NCKAP1 and WASF1/WAVE1. Within the complex, a heterodimer containing NCKAP1 and CYFIP1 interacts with a heterotrimer formed by WAVE1, ABI2 and BRK1. Component of the CYFIP1-EIF4E-FMR1 complex which is composed of CYFIP, EIF4E and FMR1. Interacts with FMR1 but does not bind to related proteins FXR1 or FXR2. Interaction with EIF4E stimulates FMR1 binding. Component of the WAVE2 complex composed of ABI1, CYFIP1/SRA1, NCKAP1/NAP1 (NCKAP1l/HEM1 in hematopoietic cells) and WASF2/WAVE2. Interacts with the active GTP-bound form of RAC1. Interacts through its C-terminus with the C-terminus of DPYSL2/CRMP2 which is necessary for DPYSL2-induced axon outgrowth. Interacts with NYAP1, NYAP2 and MYO16. Interacts with TMEM108 (via N-terminus); the interaction associates TMEM108 with the WAVE1 complex.

Its subcellular location is the cytoplasm. The protein resides in the perinuclear region. It localises to the cell projection. It is found in the lamellipodium. The protein localises to the ruffle. Its subcellular location is the synapse. The protein resides in the synaptosome. Component of the CYFIP1-EIF4E-FMR1 complex which binds to the mRNA cap and mediates translational repression. In the CYFIP1-EIF4E-FMR1 complex this subunit is an adapter between EIF4E and FMR1. Promotes the translation repression activity of FMR1 in brain probably by mediating its association with EIF4E and mRNA. Regulates formation of membrane ruffles and lamellipodia. Plays a role in axon outgrowth. Binds to F-actin but not to RNA. Part of the WAVE complex that regulates actin filament reorganization via its interaction with the Arp2/3 complex. Actin remodeling activity is regulated by RAC1. Regulator of epithelial morphogenesis. As component of the WAVE1 complex, required for BDNF-NTRK2 endocytic trafficking and signaling from early endosomes. May act as an invasion suppressor in cancers. The protein is Cytoplasmic FMR1-interacting protein 1 of Homo sapiens (Human).